The sequence spans 246 residues: MPLYQDEGVVLRTAKLGEADRILTLLTRDHGKVRAVAKGVRRTKSRFGGRLEPFMRVALLIAEGRSLDVVSQAESIAAYAGPICADFQAYTAANVICETADKLVATEKEPAVAQYRLVLGALNALAKHAHEPSTIGDSYVLRALAIAGWTPRLRVCVVCGEPISSALSWYFSIPAGGLMCAADHTPESEAVSWDAICRLSALVDGDWGELDGVPASASIQRETHQIVEEWGEYYLERPIRSMRLLD.

Belongs to the RecO family.

Functionally, involved in DNA repair and RecF pathway recombination. This Bifidobacterium adolescentis (strain ATCC 15703 / DSM 20083 / NCTC 11814 / E194a) protein is DNA repair protein RecO.